The sequence spans 68 residues: Small integral membrane protein 10-like protein 3 (68 aa).

This Homo sapiens (Human) protein is Small integral membrane protein 10-like protein 3.